Here is a 224-residue protein sequence, read N- to C-terminus: Cytochrome c biogenesis ATP-binding export protein CcmA (224 aa).

An ABC transporter domain is found at 1-220 (MQNAEAAPAL…EYAHAEVVGA (220 aa)). 40–47 (GANGSGKT) contributes to the ATP binding site.

The protein belongs to the ABC transporter superfamily. CcmA exporter (TC 3.A.1.107) family. As to quaternary structure, the complex is composed of two ATP-binding proteins (CcmA) and two transmembrane proteins (CcmB).

Its subcellular location is the cell inner membrane. It catalyses the reaction heme b(in) + ATP + H2O = heme b(out) + ADP + phosphate + H(+). Functionally, part of the ABC transporter complex CcmAB involved in the biogenesis of c-type cytochromes; once thought to export heme, this seems not to be the case, but its exact role is uncertain. Responsible for energy coupling to the transport system. In Bordetella bronchiseptica (strain ATCC BAA-588 / NCTC 13252 / RB50) (Alcaligenes bronchisepticus), this protein is Cytochrome c biogenesis ATP-binding export protein CcmA.